Here is a 53-residue protein sequence, read N- to C-terminus: Large ribosomal subunit protein bL32c (53 aa).

This sequence belongs to the bacterial ribosomal protein bL32 family.

It localises to the plastid. The protein resides in the chloroplast. The polypeptide is Large ribosomal subunit protein bL32c (Glycine max (Soybean)).